The following is a 60-amino-acid chain: Potassium channel toxin alpha-KTx 12.5 (60 aa).

The first 22 residues, 1-22 (MNKLPILIFMLLVCSMFISSDC), serve as a signal peptide directing secretion. 3 disulfides stabilise this stretch: Cys30-Cys51, Cys36-Cys56, and Cys40-Cys58.

It belongs to the short scorpion toxin superfamily. Potassium channel inhibitor family. Alpha-KTx 12 subfamily. In terms of tissue distribution, expressed by the venom gland.

It localises to the secreted. Its function is as follows. This recombinant toxin inhibits the mammalian voltage-gated potassium channels Kv1.3/KCNA3 (IC(50)=28 nM). Kv1.1/KCNA1 and Kv1.2/KCNA2 potassium channels are also weakly inhibited (IC(50)=1.73 uM and IC(50)=12.63 uM, respectively). This chain is Potassium channel toxin alpha-KTx 12.5, found in Lychas mucronatus (Chinese swimming scorpion).